The sequence spans 142 residues: Translation initiation factor 2 subunit beta (142 aa).

Belongs to the eIF-2-beta/eIF-5 family. Heterotrimer composed of an alpha, a beta and a gamma chain.

EIF-2 functions in the early steps of protein synthesis by forming a ternary complex with GTP and initiator tRNA. This chain is Translation initiation factor 2 subunit beta, found in Thermococcus gammatolerans (strain DSM 15229 / JCM 11827 / EJ3).